The primary structure comprises 554 residues: Glutamine--tRNA ligase (554 aa).

Positions 33–43 (PEPNGYLHIGH) match the 'HIGH' region motif. Residues 34–36 (EPN) and 40–46 (HIGHAKS) each bind ATP. Residues Asp-66 and Tyr-210 each coordinate L-glutamine. ATP-binding positions include Thr-229, 259–260 (RL), and 267–269 (MSK). The 'KMSKS' region motif lies at 266–270 (VMSKR).

This sequence belongs to the class-I aminoacyl-tRNA synthetase family. As to quaternary structure, monomer.

It localises to the cytoplasm. It carries out the reaction tRNA(Gln) + L-glutamine + ATP = L-glutaminyl-tRNA(Gln) + AMP + diphosphate. The polypeptide is Glutamine--tRNA ligase (Clostridioides difficile (strain 630) (Peptoclostridium difficile)).